Here is a 306-residue protein sequence, read N- to C-terminus: Stimulator of interferon genes protein 5 (306 aa).

The disordered stretch occupies residues M1–Q50. Y119, R180, and R186 together coordinate 2',3'-cGAMP.

It belongs to the STING family.

Functionally, facilitator of innate immune signaling that acts as a sensor of second messenger signals produced by cyclic GMP-AMP synthase-like receptors (cGLRs) and promotes the production of type I interferon. Innate immune response is triggered in response to nucleotides from viruses and bacteria delivered to the cytoplasm. Acts by binding cyclic dinucleotides: recognizes and binds 2'-3' linked cGAMP (2'-3'-cGAMP), a second messengers produced by cGLRs in response to nucleotides in the cytosol, such as double-stranded RNA (dsRNA). Upon binding to 2'-3'-cGAMP, oligomerizes and promotes the recruitment and subsequent activation of the transcription factor IRF3 to induce expression of type I interferon. The polypeptide is Stimulator of interferon genes protein 5 (Stylophora pistillata (Smooth cauliflower coral)).